Reading from the N-terminus, the 186-residue chain is GTP cyclohydrolase 1 (186 aa).

Positions 78, 81, and 150 each coordinate Zn(2+).

This sequence belongs to the GTP cyclohydrolase I family. Toroid-shaped homodecamer, composed of two pentamers of five dimers.

It carries out the reaction GTP + H2O = 7,8-dihydroneopterin 3'-triphosphate + formate + H(+). Its pathway is cofactor biosynthesis; 7,8-dihydroneopterin triphosphate biosynthesis; 7,8-dihydroneopterin triphosphate from GTP: step 1/1. In Enterococcus faecalis (strain ATCC 700802 / V583), this protein is GTP cyclohydrolase 1.